The sequence spans 163 residues: Lipoprotein signal peptidase (163 aa).

3 consecutive transmembrane segments (helical) span residues 7-27 (LSFL…KYLV), 64-84 (WQKY…VYLL), and 99-119 (ALII…GFVV). Catalysis depends on residues Asp-120 and Asp-138. The chain crosses the membrane as a helical span at residues 133 to 153 (VFNVADIAICVGVGLLILDSF).

The protein belongs to the peptidase A8 family.

Its subcellular location is the cell inner membrane. It catalyses the reaction Release of signal peptides from bacterial membrane prolipoproteins. Hydrolyzes -Xaa-Yaa-Zaa-|-(S,diacylglyceryl)Cys-, in which Xaa is hydrophobic (preferably Leu), and Yaa (Ala or Ser) and Zaa (Gly or Ala) have small, neutral side chains.. It functions in the pathway protein modification; lipoprotein biosynthesis (signal peptide cleavage). This protein specifically catalyzes the removal of signal peptides from prolipoproteins. The protein is Lipoprotein signal peptidase of Actinobacillus succinogenes (strain ATCC 55618 / DSM 22257 / CCUG 43843 / 130Z).